A 91-amino-acid chain; its full sequence is HssA/B-like protein 52 (91 aa).

Disordered regions lie at residues 1-20 (MTLFSSISSISNPMTSSKSS) and 72-91 (GGCGGSNGSMGGGNGSCCGI).

The protein belongs to the hssA/B family.

The chain is HssA/B-like protein 52 (hssl52) from Dictyostelium discoideum (Social amoeba).